Reading from the N-terminus, the 245-residue chain is Orotidine 5'-phosphate decarboxylase (245 aa).

Residues Asp-22, Lys-44, 71–80 (DLKFHDIPNT), Thr-131, Arg-192, Gln-201, Gly-221, and Arg-222 each bind substrate. Lys-73 serves as the catalytic Proton donor.

This sequence belongs to the OMP decarboxylase family. Type 1 subfamily. Homodimer.

It carries out the reaction orotidine 5'-phosphate + H(+) = UMP + CO2. The protein operates within pyrimidine metabolism; UMP biosynthesis via de novo pathway; UMP from orotate: step 2/2. In terms of biological role, catalyzes the decarboxylation of orotidine 5'-monophosphate (OMP) to uridine 5'-monophosphate (UMP). The sequence is that of Orotidine 5'-phosphate decarboxylase from Escherichia coli O157:H7.